Here is a 481-residue protein sequence, read N- to C-terminus: Aspartyl/glutamyl-tRNA(Asn/Gln) amidotransferase subunit B (481 aa).

This sequence belongs to the GatB/GatE family. GatB subfamily. In terms of assembly, heterotrimer of A, B and C subunits.

It carries out the reaction L-glutamyl-tRNA(Gln) + L-glutamine + ATP + H2O = L-glutaminyl-tRNA(Gln) + L-glutamate + ADP + phosphate + H(+). The catalysed reaction is L-aspartyl-tRNA(Asn) + L-glutamine + ATP + H2O = L-asparaginyl-tRNA(Asn) + L-glutamate + ADP + phosphate + 2 H(+). Its function is as follows. Allows the formation of correctly charged Asn-tRNA(Asn) or Gln-tRNA(Gln) through the transamidation of misacylated Asp-tRNA(Asn) or Glu-tRNA(Gln) in organisms which lack either or both of asparaginyl-tRNA or glutaminyl-tRNA synthetases. The reaction takes place in the presence of glutamine and ATP through an activated phospho-Asp-tRNA(Asn) or phospho-Glu-tRNA(Gln). The polypeptide is Aspartyl/glutamyl-tRNA(Asn/Gln) amidotransferase subunit B (Pseudomonas paraeruginosa (strain DSM 24068 / PA7) (Pseudomonas aeruginosa (strain PA7))).